The following is a 199-amino-acid chain: Large ribosomal subunit protein bL25 (199 aa).

Belongs to the bacterial ribosomal protein bL25 family. CTC subfamily. In terms of assembly, part of the 50S ribosomal subunit; part of the 5S rRNA/L5/L18/L25 subcomplex. Contacts the 5S rRNA. Binds to the 5S rRNA independently of L5 and L18.

Its function is as follows. This is one of the proteins that binds to the 5S RNA in the ribosome where it forms part of the central protuberance. The chain is Large ribosomal subunit protein bL25 from Rickettsia akari (strain Hartford).